The primary structure comprises 916 residues: Protein translocase subunit SecA (916 aa).

ATP-binding positions include glutamine 87, glycine 105 to threonine 109, and aspartate 512. A disordered region spans residues glutamine 857–aspartate 916. Residues cysteine 900, cysteine 902, cysteine 911, and histidine 912 each coordinate Zn(2+). Over residues lysine 906–aspartate 916 the composition is skewed to basic residues.

The protein belongs to the SecA family. Monomer and homodimer. Part of the essential Sec protein translocation apparatus which comprises SecA, SecYEG and auxiliary proteins SecDF-YajC and YidC. It depends on Zn(2+) as a cofactor.

The protein resides in the cell inner membrane. Its subcellular location is the cytoplasm. It catalyses the reaction ATP + H2O + cellular proteinSide 1 = ADP + phosphate + cellular proteinSide 2.. Functionally, part of the Sec protein translocase complex. Interacts with the SecYEG preprotein conducting channel. Has a central role in coupling the hydrolysis of ATP to the transfer of proteins into and across the cell membrane, serving both as a receptor for the preprotein-SecB complex and as an ATP-driven molecular motor driving the stepwise translocation of polypeptide chains across the membrane. The polypeptide is Protein translocase subunit SecA (Pseudomonas aeruginosa (strain UCBPP-PA14)).